The sequence spans 187 residues: UPF0301 protein YqgE (187 aa).

The protein belongs to the UPF0301 (AlgH) family.

This Escherichia coli O139:H28 (strain E24377A / ETEC) protein is UPF0301 protein YqgE.